The following is a 364-amino-acid chain: Heme A synthase (364 aa).

8 helical membrane-spanning segments follow: residues 25–45 (ALRL…LVGG), 111–131 (FLAR…WATG), 139–159 (WPLV…WWMV), 174–194 (LATH…VMRG), 212–232 (AIAL…VAGL), 270–290 (VQFV…YHMV), 305–325 (SVVL…ALLL), and 327–347 (VPLD…GFTV). Position 274 (His274) interacts with heme. His335 contributes to the heme binding site.

The protein belongs to the COX15/CtaA family. Type 2 subfamily. As to quaternary structure, interacts with CtaB. The cofactor is heme b.

It localises to the cell membrane. The enzyme catalyses Fe(II)-heme o + 2 A + H2O = Fe(II)-heme a + 2 AH2. The protein operates within porphyrin-containing compound metabolism; heme A biosynthesis; heme A from heme O: step 1/1. In terms of biological role, catalyzes the conversion of heme O to heme A by two successive hydroxylations of the methyl group at C8. The first hydroxylation forms heme I, the second hydroxylation results in an unstable dihydroxymethyl group, which spontaneously dehydrates, resulting in the formyl group of heme A. This chain is Heme A synthase, found in Allorhizobium ampelinum (strain ATCC BAA-846 / DSM 112012 / S4) (Agrobacterium vitis (strain S4)).